The following is a 608-amino-acid chain: CTP synthase (608 aa).

The segment at 1–271 (MGQAHITKHI…DAYVVRRLGL (271 aa)) is amidoligase domain. CTP is bound at residue serine 18. A UTP-binding site is contributed by serine 18. ATP contacts are provided by residues 19 to 24 (SLGKGL) and aspartate 76. Mg(2+)-binding residues include aspartate 76 and glutamate 145. CTP is bound by residues 152–154 (DIE), 192–197 (KTKPTQ), and lysine 228. UTP-binding positions include 192–197 (KTKPTQ) and lysine 228. In terms of domain architecture, Glutamine amidotransferase type-1 spans 296-545 (TIAIVGKYVD…VAAAVAHADR (250 aa)). L-glutamine is bound at residue glycine 359. Cysteine 386 acts as the Nucleophile; for glutamine hydrolysis in catalysis. L-glutamine is bound by residues 387–390 (LGLQ), glutamate 410, and arginine 471. Active-site residues include histidine 518 and glutamate 520. Positions 550–608 (LPVDLPSEDAPTPENGVPENGAAQTRGVTAGRSGGSIRRGASASRPSVSSNGTAALVSP) are disordered. Over residues 584-594 (GSIRRGASASR) the composition is skewed to low complexity.

This sequence belongs to the CTP synthase family. Homotetramer.

It carries out the reaction UTP + L-glutamine + ATP + H2O = CTP + L-glutamate + ADP + phosphate + 2 H(+). The enzyme catalyses L-glutamine + H2O = L-glutamate + NH4(+). It catalyses the reaction UTP + NH4(+) + ATP = CTP + ADP + phosphate + 2 H(+). It functions in the pathway pyrimidine metabolism; CTP biosynthesis via de novo pathway; CTP from UDP: step 2/2. Allosterically activated by GTP, when glutamine is the substrate; GTP has no effect on the reaction when ammonia is the substrate. The allosteric effector GTP functions by stabilizing the protein conformation that binds the tetrahedral intermediate(s) formed during glutamine hydrolysis. Inhibited by the product CTP, via allosteric rather than competitive inhibition. In terms of biological role, catalyzes the ATP-dependent amination of UTP to CTP with either L-glutamine or ammonia as the source of nitrogen. Regulates intracellular CTP levels through interactions with the four ribonucleotide triphosphates. This chain is CTP synthase, found in Frankia casuarinae (strain DSM 45818 / CECT 9043 / HFP020203 / CcI3).